A 708-amino-acid polypeptide reads, in one-letter code: Exocyst complex component 5 (708 aa).

Position 2 is an N-acetylalanine (alanine 2). Positions 40 to 101 (KRLLEEFVNH…AFQHFQELDE (62 aa)) form a coiled coil. Threonine 122, threonine 395, and threonine 405 each carry phosphothreonine. Serine 412 bears the Phosphoserine mark.

It belongs to the SEC10 family. As to quaternary structure, the exocyst complex is composed of EXOC1, EXOC2, EXOC3, EXOC4, EXOC5, EXOC6, EXOC7 and EXOC8. Interacts with EXOC3L1. In terms of tissue distribution, ubiquitous.

The protein resides in the cytoplasm. The protein localises to the midbody. In terms of biological role, component of the exocyst complex involved in the docking of exocytic vesicles with fusion sites on the plasma membrane. The protein is Exocyst complex component 5 (EXOC5) of Homo sapiens (Human).